Reading from the N-terminus, the 140-residue chain is MTSPLLESRRQLRKCAFQALMSLEFGTDVETACRFAYTHDREDTAVQLPAFLIDLVSGVQAKKEELDKQITQHLKAGWTIERLTLVERNLLRLGVFEITSFDTPQLVAVNEAIELAKDFSDQKSARFINGLLSQFVTEEQ.

This sequence belongs to the NusB family.

Functionally, involved in transcription antitermination. Required for transcription of ribosomal RNA (rRNA) genes. Binds specifically to the boxA antiterminator sequence of the ribosomal RNA (rrn) operons. In Streptococcus pneumoniae (strain JJA), this protein is Transcription antitermination protein NusB.